The primary structure comprises 472 residues: Aspartyl/glutamyl-tRNA(Asn/Gln) amidotransferase subunit B (472 aa).

Belongs to the GatB/GatE family. GatB subfamily. Heterotrimer of A, B and C subunits.

It catalyses the reaction L-glutamyl-tRNA(Gln) + L-glutamine + ATP + H2O = L-glutaminyl-tRNA(Gln) + L-glutamate + ADP + phosphate + H(+). It carries out the reaction L-aspartyl-tRNA(Asn) + L-glutamine + ATP + H2O = L-asparaginyl-tRNA(Asn) + L-glutamate + ADP + phosphate + 2 H(+). Its function is as follows. Allows the formation of correctly charged Asn-tRNA(Asn) or Gln-tRNA(Gln) through the transamidation of misacylated Asp-tRNA(Asn) or Glu-tRNA(Gln) in organisms which lack either or both of asparaginyl-tRNA or glutaminyl-tRNA synthetases. The reaction takes place in the presence of glutamine and ATP through an activated phospho-Asp-tRNA(Asn) or phospho-Glu-tRNA(Gln). This is Aspartyl/glutamyl-tRNA(Asn/Gln) amidotransferase subunit B from Elusimicrobium minutum (strain Pei191).